The primary structure comprises 200 residues: Interferon lambda-2 (200 aa).

A signal peptide spans 1 to 25 (MKLDMTGDCTPVLVLMAAVLTVTGA).

Belongs to the lambda interferon family.

The protein resides in the secreted. Cytokine with antiviral, antitumour and immunomodulatory activities. Plays a critical role in the antiviral host defense, predominantly in the epithelial tissues. Acts as a ligand for the heterodimeric class II cytokine receptor composed of IL10RB and IFNLR1, and receptor engagement leads to the activation of the JAK/STAT signaling pathway resulting in the expression of IFN-stimulated genes (ISG), which mediate the antiviral state. Has a restricted receptor distribution and therefore restricted targets: is primarily active in epithelial cells and this cell type-selective action is because of the epithelial cell-specific expression of its receptor IFNLR1. Seems not to be essential for early virus-activated host defense in vaginal infection, but plays an important role in Toll-like receptor (TLR)-induced antiviral defense. Plays a significant role in the antiviral immune defense in the intestinal epithelium. Exerts an immunomodulatory effect by up-regulating MHC class I antigen expression. The chain is Interferon lambda-2 (IFNL2) from Homo sapiens (Human).